A 100-amino-acid chain; its full sequence is Small ribosomal subunit protein uS14c (100 aa).

Belongs to the universal ribosomal protein uS14 family. Part of the 30S ribosomal subunit.

The protein localises to the plastid. It is found in the chloroplast. In terms of biological role, binds 16S rRNA, required for the assembly of 30S particles. The polypeptide is Small ribosomal subunit protein uS14c (Stigeoclonium helveticum (Green alga)).